The primary structure comprises 270 residues: BPI fold-containing family A member 5 (270 aa).

An N-terminal signal peptide occupies residues 1–19 (MFLAGSFIVLCGLLAQSTA). A disulfide bridge connects residues Cys196 and Cys238.

Belongs to the BPI/LBP/Plunc superfamily. Plunc family. Expressed in interpapillar epithelium of the anterior part of the tongue.

Its subcellular location is the secreted. Functionally, may play a role in innate immunity in the oral cavity. The polypeptide is BPI fold-containing family A member 5 (Bpifa5) (Mus musculus (Mouse)).